A 795-amino-acid chain; its full sequence is Phenylalanine--tRNA ligase beta subunit (795 aa).

One can recognise a tRNA-binding domain in the interval Ala39 to Arg148. Positions Pro401–Asn476 constitute a B5 domain. Positions 454, 460, 463, and 464 each coordinate Mg(2+). One can recognise an FDX-ACB domain in the interval Ser701–Arg794.

Belongs to the phenylalanyl-tRNA synthetase beta subunit family. Type 1 subfamily. Tetramer of two alpha and two beta subunits. The cofactor is Mg(2+).

It is found in the cytoplasm. It carries out the reaction tRNA(Phe) + L-phenylalanine + ATP = L-phenylalanyl-tRNA(Phe) + AMP + diphosphate + H(+). This chain is Phenylalanine--tRNA ligase beta subunit (pheT), found in Pasteurella multocida (strain Pm70).